A 455-amino-acid polypeptide reads, in one-letter code: 3-phosphoshikimate 1-carboxyvinyltransferase (455 aa).

The segment at 1 to 23 (MSHGSNPRPATARKSSDLKGTLR) is disordered. Residues lysine 28, serine 29, and arginine 33 each contribute to the 3-phosphoshikimate site. Position 28 (lysine 28) interacts with phosphoenolpyruvate. Phosphoenolpyruvate is bound by residues glycine 100 and arginine 128. Residues serine 173, glutamine 175, aspartate 326, and lysine 353 each contribute to the 3-phosphoshikimate site. Position 175 (glutamine 175) interacts with phosphoenolpyruvate. Aspartate 326 (proton acceptor) is an active-site residue. Phosphoenolpyruvate-binding residues include arginine 357 and arginine 405.

The protein belongs to the EPSP synthase family. As to quaternary structure, monomer.

Its subcellular location is the cytoplasm. It catalyses the reaction 3-phosphoshikimate + phosphoenolpyruvate = 5-O-(1-carboxyvinyl)-3-phosphoshikimate + phosphate. It participates in metabolic intermediate biosynthesis; chorismate biosynthesis; chorismate from D-erythrose 4-phosphate and phosphoenolpyruvate: step 6/7. In terms of biological role, catalyzes the transfer of the enolpyruvyl moiety of phosphoenolpyruvate (PEP) to the 5-hydroxyl of shikimate-3-phosphate (S3P) to produce enolpyruvyl shikimate-3-phosphate and inorganic phosphate. The chain is 3-phosphoshikimate 1-carboxyvinyltransferase from Rhizobium meliloti (strain 1021) (Ensifer meliloti).